We begin with the raw amino-acid sequence, 131 residues long: Biogenesis of lysosome-related organelles complex 1 subunit 5 (131 aa).

This sequence belongs to the BLOC1S5 family. As to quaternary structure, component of the biogenesis of lysosome-related organelles complex-1 (BLOC-1) composed at least of blos-1, blos-2, blos-4, dsbn-1, glo-2, mutd-1 and snpn-1.

Its function is as follows. Component of the biogenesis of lysosome-related organelles complex-1 (BLOC-1) involved in gut granule biogenesis. The polypeptide is Biogenesis of lysosome-related organelles complex 1 subunit 5 (mutd-1) (Caenorhabditis elegans).